Consider the following 406-residue polypeptide: Phosphopentomutase (406 aa).

Mn(2+) contacts are provided by aspartate 10, aspartate 305, histidine 310, aspartate 346, histidine 347, and histidine 358.

It belongs to the phosphopentomutase family. The cofactor is Mn(2+).

The protein resides in the cytoplasm. It catalyses the reaction 2-deoxy-alpha-D-ribose 1-phosphate = 2-deoxy-D-ribose 5-phosphate. The catalysed reaction is alpha-D-ribose 1-phosphate = D-ribose 5-phosphate. It functions in the pathway carbohydrate degradation; 2-deoxy-D-ribose 1-phosphate degradation; D-glyceraldehyde 3-phosphate and acetaldehyde from 2-deoxy-alpha-D-ribose 1-phosphate: step 1/2. In terms of biological role, isomerase that catalyzes the conversion of deoxy-ribose 1-phosphate (dRib-1-P) and ribose 1-phosphate (Rib-1-P) to deoxy-ribose 5-phosphate (dRib-5-P) and ribose 5-phosphate (Rib-5-P), respectively. This is Phosphopentomutase from Methylorubrum extorquens (strain PA1) (Methylobacterium extorquens).